Here is a 262-residue protein sequence, read N- to C-terminus: Sugar fermentation stimulation protein homolog (262 aa).

Belongs to the SfsA family.

This Lawsonia intracellularis (strain PHE/MN1-00) protein is Sugar fermentation stimulation protein homolog.